The chain runs to 126 residues: MAILGLGTDIVEIARIEAVISRSGERLARRVLSDNEWAIWETHQQPVRFLAKRFAVKEAAAKAFGTGIRNGLAFNQFEVFNDELGKPRLRLWGEALILAEKLGVAHMHVTLADERHYACATVILES.

Mg(2+) contacts are provided by aspartate 9 and glutamate 58.

Belongs to the P-Pant transferase superfamily. AcpS family. Mg(2+) is required as a cofactor.

It is found in the cytoplasm. The catalysed reaction is apo-[ACP] + CoA = holo-[ACP] + adenosine 3',5'-bisphosphate + H(+). Transfers the 4'-phosphopantetheine moiety from coenzyme A to a Ser of acyl-carrier-protein. This is Holo-[acyl-carrier-protein] synthase from Salmonella newport (strain SL254).